The primary structure comprises 388 residues: Protein RecA (388 aa).

An ATP-binding site is contributed by 79-86 (GPESSGKT). Residues 347–388 (IDGEEVSEQDTENKKDEPKKEEAVNEEVPLDLGDELEIEIEE) are disordered. A compositionally biased stretch (basic and acidic residues) spans 357 to 369 (TENKKDEPKKEEA). Acidic residues predominate over residues 370–388 (VNEEVPLDLGDELEIEIEE).

The protein belongs to the RecA family.

The protein resides in the cytoplasm. Its function is as follows. Can catalyze the hydrolysis of ATP in the presence of single-stranded DNA, the ATP-dependent uptake of single-stranded DNA by duplex DNA, and the ATP-dependent hybridization of homologous single-stranded DNAs. It interacts with LexA causing its activation and leading to its autocatalytic cleavage. The protein is Protein RecA of Streptococcus pneumoniae (strain Hungary19A-6).